Reading from the N-terminus, the 88-residue chain is Small ribosomal subunit protein bS20 (88 aa).

It belongs to the bacterial ribosomal protein bS20 family.

Its function is as follows. Binds directly to 16S ribosomal RNA. This Rhodospirillum rubrum (strain ATCC 11170 / ATH 1.1.1 / DSM 467 / LMG 4362 / NCIMB 8255 / S1) protein is Small ribosomal subunit protein bS20.